Here is a 293-residue protein sequence, read N- to C-terminus: Formamidopyrimidine-DNA glycosylase (293 aa).

P2 (schiff-base intermediate with DNA) is an active-site residue. E3 functions as the Proton donor in the catalytic mechanism. K60 serves as the catalytic Proton donor; for beta-elimination activity. DNA-binding residues include H110, R129, and R174. The segment at 259 to 293 adopts an FPG-type zinc-finger fold; sequence NVYRRTGKECRKCGNLIERKKISGRSTHWCPKCQK. The active-site Proton donor; for delta-elimination activity is R283.

The protein belongs to the FPG family. As to quaternary structure, monomer. Zn(2+) serves as cofactor.

It catalyses the reaction Hydrolysis of DNA containing ring-opened 7-methylguanine residues, releasing 2,6-diamino-4-hydroxy-5-(N-methyl)formamidopyrimidine.. It carries out the reaction 2'-deoxyribonucleotide-(2'-deoxyribose 5'-phosphate)-2'-deoxyribonucleotide-DNA = a 3'-end 2'-deoxyribonucleotide-(2,3-dehydro-2,3-deoxyribose 5'-phosphate)-DNA + a 5'-end 5'-phospho-2'-deoxyribonucleoside-DNA + H(+). In terms of biological role, involved in base excision repair of DNA damaged by oxidation or by mutagenic agents. Acts as a DNA glycosylase that recognizes and removes damaged bases. Has a preference for oxidized purines, such as 7,8-dihydro-8-oxoguanine (8-oxoG). Has AP (apurinic/apyrimidinic) lyase activity and introduces nicks in the DNA strand. Cleaves the DNA backbone by beta-delta elimination to generate a single-strand break at the site of the removed base with both 3'- and 5'-phosphates. The protein is Formamidopyrimidine-DNA glycosylase of Prochlorococcus marinus (strain MIT 9215).